Consider the following 550-residue polypeptide: Membrane protein of ER body 2 (550 aa).

Residues 46 to 199 (EFRSKAAATA…SSDSEEKSNL (154 aa)) form a disordered region. 2 stretches are compositionally biased toward low complexity: residues 80–105 (SVSE…SETG) and 112–121 (TGSNEENGNN). Polar residues predominate over residues 122 to 132 (WLESSSTNLPN). The stretch at 134-165 (ENKRQRNGEDCEIEEEEENNERSLSDSEEKSN) forms a coiled coil. The span at 143–152 (DCEIEEEEEN) shows a compositional bias: acidic residues. 2 stretches are compositionally biased toward basic and acidic residues: residues 153–166 (NERS…KSNL) and 185–198 (KNER…EKSN). 4 helical membrane passes run 374-394 (STMN…IVLA), 425-445 (ILVA…VYAF), 458-478 (ISVF…KVYV), and 500-520 (SIVV…GEYI). Residues 393–418 (LAQNFQDLRNSSDQEKDRYEELLGRR) adopt a coiled-coil conformation.

It belongs to the CCC1 family. Interacts directly or indirectly with NAI2.

Its subcellular location is the endoplasmic reticulum membrane. In terms of biological role, may sequester excess cytosolic iron and manganese into endoplasmic reticulum to reduce metal ion toxicity. Not essential for the accumulation of ER body components, including PYK10. The sequence is that of Membrane protein of ER body 2 (MEB2) from Arabidopsis thaliana (Mouse-ear cress).